The chain runs to 245 residues: Uridylate kinase (245 aa).

12–15 (KISG) lines the ATP pocket. Glycine 55 serves as a coordination point for UMP. Residues glycine 56 and arginine 60 each coordinate ATP. UMP is bound by residues aspartate 76 and 137–144 (AGAPYLTT). The ATP site is built by threonine 164, tyrosine 171, and aspartate 174.

It belongs to the UMP kinase family. As to quaternary structure, homohexamer.

It is found in the cytoplasm. The catalysed reaction is UMP + ATP = UDP + ADP. It functions in the pathway pyrimidine metabolism; CTP biosynthesis via de novo pathway; UDP from UMP (UMPK route): step 1/1. Inhibited by UTP. Its function is as follows. Catalyzes the reversible phosphorylation of UMP to UDP. The chain is Uridylate kinase from Chlamydia trachomatis serovar A (strain ATCC VR-571B / DSM 19440 / HAR-13).